The chain runs to 369 residues: MKSGRFIGVMSGTSLDGVDVVLATIDEHRVAQLASLSWPIPVSLKQAVLDICQGQQLTLSQFGQLDTQLGRLFADAVNALLKEQNLQARDIVAIGCHGQTVWHEPTGVAPHTLQIGDNNQIVARTGITVVGDFRRRDIALGGQGAPLVPAFHHALLAHPTERRMVLNIGGIANLSLLIPGQPVGGYDTGPGNMLMDAWIWRQAGKPYDKDAEWARAGKVILPLLQNMLSDPYFSQPAPKSTGREYFNYGWLERHLRHFPGVDPRDVQATLAELTAVTISEQVLLSGGCERLMVCGGGGRNPLLMARLAALLPGTEVTTTDAVGISGDDMEALAFAWLAWRTLAGLPGNLPSVTGASQETVLGAIFPANP.

12–19 (GTSLDGVD) is a binding site for ATP.

The protein belongs to the anhydro-N-acetylmuramic acid kinase family.

It carries out the reaction 1,6-anhydro-N-acetyl-beta-muramate + ATP + H2O = N-acetyl-D-muramate 6-phosphate + ADP + H(+). Its pathway is amino-sugar metabolism; 1,6-anhydro-N-acetylmuramate degradation. It participates in cell wall biogenesis; peptidoglycan recycling. Its function is as follows. Catalyzes the specific phosphorylation of 1,6-anhydro-N-acetylmuramic acid (anhMurNAc) with the simultaneous cleavage of the 1,6-anhydro ring, generating MurNAc-6-P. Is required for the utilization of anhMurNAc either imported from the medium or derived from its own cell wall murein, and thus plays a role in cell wall recycling. The chain is Anhydro-N-acetylmuramic acid kinase from Escherichia coli O1:K1 / APEC.